The following is a 269-amino-acid chain: Ribonuclease HII (269 aa).

The RNase H type-2 domain maps to 83–269 (YLIAGVDEVG…HRMSFLTNIL (187 aa)). Positions 89, 90, and 185 each coordinate a divalent metal cation.

The protein belongs to the RNase HII family. Requires Mn(2+) as cofactor. Mg(2+) is required as a cofactor.

The protein resides in the cytoplasm. The enzyme catalyses Endonucleolytic cleavage to 5'-phosphomonoester.. Functionally, endonuclease that specifically degrades the RNA of RNA-DNA hybrids. The chain is Ribonuclease HII from Clostridium botulinum (strain ATCC 19397 / Type A).